A 431-amino-acid chain; its full sequence is Growth-regulating factor 9 (431 aa).

Residues 24 to 59 (WMKAAQLMEFRMQALVYRYIEAGLRVPHHLVVPIWN) enclose the QLQ domain. 2 consecutive WRC domains span residues 89 to 133 (ETEP…LVES) and 307 to 351 (DNEP…VDTT). 4 short sequence motifs (bipartite nuclear localization signal) span residues 94 to 104 (RCRRTDGKKWR), 122 to 129 (RGRKRSRK), 312 to 322 (RCRRTDGKKWR), and 340 to 345 (RGMKKK).

Belongs to the GRF family. Interacts with GIF1. Detected in the shoot apical meristem (SAM) and in young leaf primordium.

Its subcellular location is the nucleus. Functionally, transcription activator that plays a role in the regulation of cell expansion in leaf and cotyledons tissues. Component of a network formed by miR396, the GRFs and their interacting factors (GIFs) acting in the regulation of meristem function, at least partially through the control of cell proliferation. This is Growth-regulating factor 9 (GRF9) from Arabidopsis thaliana (Mouse-ear cress).